The following is a 533-amino-acid chain: Thromboxane-A synthase (533 aa).

The Cytoplasmic segment spans residues 1-10 (MEVLGLLKFE). A helical transmembrane segment spans residues 11 to 31 (VSGTVVTVTLSVVLLALLKWY). At 32–75 (STSAFSRLRKLGIRHPEPSPFVGNLMFFRQGFWESHLELRERYG) the chain is on the lumenal side. A helical membrane pass occupies residues 76 to 96 (PLCGYYLGRRMYIVISDPDMI). Topologically, residues 97–223 (KEVLVENFSN…QRVFAFSTPR (127 aa)) are cytoplasmic. Residues 224 to 244 (PLLALILSFPSIMVPLARILP) form a helical membrane-spanning segment. The Lumenal segment spans residues 245–335 (NKNRDELNGF…LTVDEIAGQA (91 aa)). A helical membrane pass occupies residues 336–356 (FLFLIAGHEITTNTLSFITYL). Residues 357–533 (LATHPECQER…NGVYVKIVSR (177 aa)) lie on the Cytoplasmic side of the membrane. Residue C479 participates in heme binding.

Belongs to the cytochrome P450 family. In terms of assembly, monomer. It depends on heme as a cofactor. Expressed in bone marrow, spleen, lung, thymus, liver, uterus, and macrophages.

It is found in the endoplasmic reticulum membrane. The enzyme catalyses prostaglandin H2 = thromboxane A2. It catalyses the reaction prostaglandin H2 = (12S)-hydroxy-(5Z,8E,10E)-heptadecatrienoate + malonaldehyde. The catalysed reaction is a hydroperoxyeicosatetraenoate = an oxoeicosatetraenoate + H2O. It carries out the reaction (15S)-hydroperoxy-(5Z,8Z,11Z,13E)-eicosatetraenoate = 15-oxo-(5Z,8Z,11Z,13E)-eicosatetraenoate + H2O. The enzyme catalyses (15S)-hydroperoxy-(5Z,8Z,11Z,13E)-eicosatetraenoate + AH2 = (15S)-hydroxy-(5Z,8Z,11Z,13E)-eicosatetraenoate + A + H2O. Its function is as follows. Catalyzes the conversion of prostaglandin H2 (PGH2) to thromboxane A2 (TXA2), a potent inducer of blood vessel constriction and platelet aggregation. Also cleaves PGH2 to 12-hydroxy-heptadecatrienoicacid (12-HHT) and malondialdehyde, which is known to act as a mediator of DNA damage. 12-HHT and malondialdehyde are formed stoichiometrically in the same amounts as TXA2. Additionally, displays dehydratase activity, toward (15S)-hydroperoxy-(5Z,8Z,11Z,13E)-eicosatetraenoate (15(S)-HPETE) producing 15-KETE and 15-HETE. This Rattus norvegicus (Rat) protein is Thromboxane-A synthase (Tbxas1).